Consider the following 65-residue polypeptide: Small ribosomal subunit protein bS21 (65 aa).

The disordered stretch occupies residues aspartate 44–serine 65. Over residues lysine 48–glutamine 57 the composition is skewed to basic residues.

The protein belongs to the bacterial ribosomal protein bS21 family.

The polypeptide is Small ribosomal subunit protein bS21 (Prosthecochloris aestuarii (strain DSM 271 / SK 413)).